Reading from the N-terminus, the 248-residue chain is 3-deoxy-manno-octulosonate cytidylyltransferase (248 aa).

It belongs to the KdsB family.

The protein localises to the cytoplasm. The enzyme catalyses 3-deoxy-alpha-D-manno-oct-2-ulosonate + CTP = CMP-3-deoxy-beta-D-manno-octulosonate + diphosphate. Its pathway is nucleotide-sugar biosynthesis; CMP-3-deoxy-D-manno-octulosonate biosynthesis; CMP-3-deoxy-D-manno-octulosonate from 3-deoxy-D-manno-octulosonate and CTP: step 1/1. It functions in the pathway bacterial outer membrane biogenesis; lipopolysaccharide biosynthesis. Activates KDO (a required 8-carbon sugar) for incorporation into bacterial lipopolysaccharide in Gram-negative bacteria. In Chlorobaculum tepidum (strain ATCC 49652 / DSM 12025 / NBRC 103806 / TLS) (Chlorobium tepidum), this protein is 3-deoxy-manno-octulosonate cytidylyltransferase.